Here is a 300-residue protein sequence, read N- to C-terminus: Free fatty acid receptor 1 (300 aa).

Topologically, residues 1–8 are extracellular; the sequence is MDLPPQLS. Residues 9–31 traverse the membrane as a helical segment; the sequence is FALYVAAFALGFPLNVLAIRGAR. Over 32–41 the chain is Cytoplasmic; sequence AHARRRLTPS. Residues 42–64 traverse the membrane as a helical segment; that stretch reads LVYALNLGCSDLLLTVSLPLKAV. The Extracellular segment spans residues 65 to 79; that stretch reads EALASGAWPLPASLC. A disulfide bridge connects residues cysteine 79 and cysteine 170. The helical transmembrane segment at 80 to 101 threads the bilayer; sequence PVFGVAHFAPLYAGGGFLAALS. Residues 102–121 lie on the Cytoplasmic side of the membrane; that stretch reads AGRYLGAAFPLGYQAFRRPC. Residues 122-142 form a helical membrane-spanning segment; that stretch reads YSWGVCAAIWALVLCHLGLVF. At 143–178 the chain is on the extracellular side; the sequence is VLEAPGGWLDHSNTSLGINTPVNGSPVCLEAWDPAS. Asparagine 155 carries N-linked (GlcNAc...) asparagine glycosylation. Residues 179-200 traverse the membrane as a helical segment; it reads AGPARFSLSLLLFFLPLAITAF. The Cytoplasmic segment spans residues 201–223; sequence CYVGCLRALAHSGLTHRRKLRAA. The chain crosses the membrane as a helical span at residues 224-248; it reads WVAGGALLTLLLCVGPYNASNVASF. Over 249-256 the chain is Extracellular; it reads LNPNLGGS. The chain crosses the membrane as a helical span at residues 257 to 279; sequence WRKLGLITGAWSVVLNPLVTGYL. Over 280–300 the chain is Cytoplasmic; that stretch reads GRGPGLKTVCAARTQGSTSQK.

The protein belongs to the G-protein coupled receptor 1 family.

It is found in the cell membrane. Functionally, G-protein coupled receptor for medium and long chain saturated and unsaturated fatty acids that plays an important role in glucose homeostasis. Fatty acid binding increases glucose-stimulated insulin secretion, and may also enhance the secretion of glucagon-like peptide 1 (GLP-1). May also play a role in bone homeostasis; receptor signaling activates pathways that inhibit osteoclast differentiation. Ligand binding leads to a conformation change that triggers signaling via G-proteins that activate phospholipase C, leading to an increase of the intracellular calcium concentration. Seems to act through a G(q) and G(i)-mediated pathway. Mediates the anti-inflammatory effects of omega-3 polyunsaturated fatty acids (PUFAs) via inhibition of NLRP3 inflammasome activation. This chain is Free fatty acid receptor 1 (FFAR1), found in Macaca fascicularis (Crab-eating macaque).